The primary structure comprises 62 residues: Large ribosomal subunit protein bL32 (62 aa).

It belongs to the bacterial ribosomal protein bL32 family.

The polypeptide is Large ribosomal subunit protein bL32 (rpmF) (Treponema pallidum (strain Nichols)).